Reading from the N-terminus, the 177-residue chain is Large ribosomal subunit protein uL6 (177 aa).

It belongs to the universal ribosomal protein uL6 family. In terms of assembly, part of the 50S ribosomal subunit.

Its function is as follows. This protein binds to the 23S rRNA, and is important in its secondary structure. It is located near the subunit interface in the base of the L7/L12 stalk, and near the tRNA binding site of the peptidyltransferase center. The protein is Large ribosomal subunit protein uL6 of Acinetobacter baumannii (strain AB307-0294).